Consider the following 159-residue polypeptide: Transcription elongation factor GreA (159 aa).

The protein belongs to the GreA/GreB family.

Its function is as follows. Necessary for efficient RNA polymerase transcription elongation past template-encoded arresting sites. The arresting sites in DNA have the property of trapping a certain fraction of elongating RNA polymerases that pass through, resulting in locked ternary complexes. Cleavage of the nascent transcript by cleavage factors such as GreA or GreB allows the resumption of elongation from the new 3'terminus. GreA releases sequences of 2 to 3 nucleotides. This chain is Transcription elongation factor GreA, found in Buchnera aphidicola subsp. Cinara cedri (strain Cc).